The sequence spans 73 residues: Sec-independent protein translocase protein TatA (73 aa).

Residues methionine 1–glycine 21 form a helical membrane-spanning segment. The segment at methionine 43–alanine 73 is disordered.

Belongs to the TatA/E family. As to quaternary structure, the Tat system comprises two distinct complexes: a TatABC complex, containing multiple copies of TatA, TatB and TatC subunits, and a separate TatA complex, containing only TatA subunits. Substrates initially bind to the TatABC complex, which probably triggers association of the separate TatA complex to form the active translocon.

The protein resides in the cell inner membrane. Its function is as follows. Part of the twin-arginine translocation (Tat) system that transports large folded proteins containing a characteristic twin-arginine motif in their signal peptide across membranes. TatA could form the protein-conducting channel of the Tat system. This is Sec-independent protein translocase protein TatA from Campylobacter concisus (strain 13826).